The chain runs to 557 residues: Potassium-transporting ATPase potassium-binding subunit (557 aa).

12 helical membrane-spanning segments follow: residues 5–25, 63–83, 132–152, 170–190, 253–273, 283–303, 329–349, 356–376, 379–399, 416–436, 484–504, and 526–546; these read GFLL…PLGS, LCAI…MLLG, GLTV…FALI, LLRI…LFFI, FVQM…FGEV, LLWA…WAEV, VLVS…AVIA, ALGG…FGGV, GLYG…LMIG, LTAL…ALAM, LLAF…MAIA, and LFVG…FIPA.

It belongs to the KdpA family. The system is composed of three essential subunits: KdpA, KdpB and KdpC.

It is found in the cell inner membrane. In terms of biological role, part of the high-affinity ATP-driven potassium transport (or Kdp) system, which catalyzes the hydrolysis of ATP coupled with the electrogenic transport of potassium into the cytoplasm. This subunit binds the periplasmic potassium ions and delivers the ions to the membrane domain of KdpB through an intramembrane tunnel. This is Potassium-transporting ATPase potassium-binding subunit from Escherichia coli O9:H4 (strain HS).